The sequence spans 194 residues: GTP cyclohydrolase 1 (194 aa).

Residues Cys83, His86, and Cys155 each coordinate Zn(2+).

This sequence belongs to the GTP cyclohydrolase I family. In terms of assembly, toroid-shaped homodecamer, composed of two pentamers of five dimers.

The enzyme catalyses GTP + H2O = 7,8-dihydroneopterin 3'-triphosphate + formate + H(+). The protein operates within cofactor biosynthesis; 7,8-dihydroneopterin triphosphate biosynthesis; 7,8-dihydroneopterin triphosphate from GTP: step 1/1. The protein is GTP cyclohydrolase 1 (folE) of Streptococcus pyogenes.